The chain runs to 304 residues: Acetylxylan esterase A (304 aa).

The N-terminal stretch at 1 to 19 is a signal peptide; sequence MVKLQYLLSILLYAYSCTA. The active-site Charge relay system is the serine 147. N-linked (GlcNAc...) asparagine glycosylation is present at asparagine 189.

The protein belongs to the carbohydrate esterase 1 (CE1) family. AxeA subfamily. Monomer.

It localises to the secreted. The catalysed reaction is Deacetylation of xylans and xylo-oligosaccharides.. Its pathway is glycan degradation; xylan degradation. In terms of biological role, acetylxylan esterase involved in the hydrolysis of xylan, a major structural heterogeneous polysaccharide found in plant biomass representing the second most abundant polysaccharide in the biosphere, after cellulose. Degrades acetylated xylans by cleaving acetyl side groups from the hetero-xylan backbone. The protein is Acetylxylan esterase A (axeA) of Emericella nidulans (strain FGSC A4 / ATCC 38163 / CBS 112.46 / NRRL 194 / M139) (Aspergillus nidulans).